The following is a 271-amino-acid chain: Formamidopyrimidine-DNA glycosylase (271 aa).

The active-site Schiff-base intermediate with DNA is the proline 2. Glutamate 3 serves as the catalytic Proton donor. Lysine 57 functions as the Proton donor; for beta-elimination activity in the catalytic mechanism. DNA is bound by residues histidine 90, arginine 109, and lysine 151. Residues 236-270 (HVYGRGGESCTQCGNLLSEIKLGQRATVFCGLCQT) form an FPG-type zinc finger. Arginine 260 (proton donor; for delta-elimination activity) is an active-site residue.

The protein belongs to the FPG family. As to quaternary structure, monomer. Requires Zn(2+) as cofactor.

The enzyme catalyses Hydrolysis of DNA containing ring-opened 7-methylguanine residues, releasing 2,6-diamino-4-hydroxy-5-(N-methyl)formamidopyrimidine.. It carries out the reaction 2'-deoxyribonucleotide-(2'-deoxyribose 5'-phosphate)-2'-deoxyribonucleotide-DNA = a 3'-end 2'-deoxyribonucleotide-(2,3-dehydro-2,3-deoxyribose 5'-phosphate)-DNA + a 5'-end 5'-phospho-2'-deoxyribonucleoside-DNA + H(+). Involved in base excision repair of DNA damaged by oxidation or by mutagenic agents. Acts as a DNA glycosylase that recognizes and removes damaged bases. Has a preference for oxidized purines, such as 7,8-dihydro-8-oxoguanine (8-oxoG). Has AP (apurinic/apyrimidinic) lyase activity and introduces nicks in the DNA strand. Cleaves the DNA backbone by beta-delta elimination to generate a single-strand break at the site of the removed base with both 3'- and 5'-phosphates. The protein is Formamidopyrimidine-DNA glycosylase of Shewanella woodyi (strain ATCC 51908 / MS32).